Here is an 860-residue protein sequence, read N- to C-terminus: Pentatricopeptide repeat-containing protein At1g18900 (860 aa).

PPR repeat units lie at residues 363–397, 398–432, 433–467, 468–502, 503–537, 538–572, 573–607, and 608–642; these read DGHT…GCQP, NTVT…GCKP, DRVT…GLSP, DTFT…GCTP, NLVT…GFEP, DKVT…NWIP, DEPV…GLRP, and NVPT…GLRP. The region spanning 760-843 is the Smr domain; the sequence is INLHVMSEGT…NSGCFVGSGE (84 aa).

It belongs to the PPR family. P subfamily.

The polypeptide is Pentatricopeptide repeat-containing protein At1g18900 (Arabidopsis thaliana (Mouse-ear cress)).